A 147-amino-acid chain; its full sequence is Large ribosomal subunit protein uL13 (147 aa).

Belongs to the universal ribosomal protein uL13 family. In terms of assembly, part of the 50S ribosomal subunit.

This protein is one of the early assembly proteins of the 50S ribosomal subunit, although it is not seen to bind rRNA by itself. It is important during the early stages of 50S assembly. The sequence is that of Large ribosomal subunit protein uL13 from Frankia casuarinae (strain DSM 45818 / CECT 9043 / HFP020203 / CcI3).